The following is a 582-amino-acid chain: Threonine--tRNA ligase (582 aa).

Positions 185 to 478 (DHRKLGKELE…LTEQYGGAFP (294 aa)) are catalytic. 3 residues coordinate Zn(2+): Cys278, His329, and His455.

The protein belongs to the class-II aminoacyl-tRNA synthetase family. Homodimer. Requires Zn(2+) as cofactor.

It is found in the cytoplasm. The enzyme catalyses tRNA(Thr) + L-threonine + ATP = L-threonyl-tRNA(Thr) + AMP + diphosphate + H(+). Its function is as follows. Catalyzes the attachment of threonine to tRNA(Thr) in a two-step reaction: L-threonine is first activated by ATP to form Thr-AMP and then transferred to the acceptor end of tRNA(Thr). Also edits incorrectly charged L-seryl-tRNA(Thr). The chain is Threonine--tRNA ligase from Dehalococcoides mccartyi (strain CBDB1).